A 433-amino-acid polypeptide reads, in one-letter code: Enolase (433 aa).

Position 164 (Gln164) interacts with (2R)-2-phosphoglycerate. The Proton donor role is filled by Glu206. The Mg(2+) site is built by Asp243, Glu289, and Asp316. Positions 341, 370, 371, and 392 each coordinate (2R)-2-phosphoglycerate. Lys341 (proton acceptor) is an active-site residue.

Belongs to the enolase family. Requires Mg(2+) as cofactor.

The protein localises to the cytoplasm. Its subcellular location is the secreted. It is found in the cell surface. It carries out the reaction (2R)-2-phosphoglycerate = phosphoenolpyruvate + H2O. It participates in carbohydrate degradation; glycolysis; pyruvate from D-glyceraldehyde 3-phosphate: step 4/5. Its function is as follows. Catalyzes the reversible conversion of 2-phosphoglycerate (2-PG) into phosphoenolpyruvate (PEP). It is essential for the degradation of carbohydrates via glycolysis. The sequence is that of Enolase from Borreliella burgdorferi (strain ATCC 35210 / DSM 4680 / CIP 102532 / B31) (Borrelia burgdorferi).